Here is a 121-residue protein sequence, read N- to C-terminus: Small ribosomal subunit protein bS6 (121 aa).

The protein belongs to the bacterial ribosomal protein bS6 family.

Functionally, binds together with bS18 to 16S ribosomal RNA. This chain is Small ribosomal subunit protein bS6, found in Rickettsia peacockii (strain Rustic).